Consider the following 476-residue polypeptide: Transposase for transposon Tn5 (476 aa).

The tract at residues methionine 1–serine 70 is interaction with DNA. Aspartate 97 and aspartate 188 together coordinate Mg(2+). 2 interaction with DNA regions span residues tyrosine 237 to asparagine 255 and tyrosine 319 to asparagine 348. Glutamate 326 lines the Mg(2+) pocket. An important for dimerization region spans residues serine 369–isoleucine 476.

Belongs to the transposase 11 family. As to quaternary structure, monomer. Homodimer of tnp (isoform 1), and heterodimer of tnp (isoform 1) and inh (isoform 2). It depends on Mg(2+) as a cofactor.

In terms of biological role, mediates transposition of transposon Tn5 by a 'cut and paste' mechanism. First, the monomeric transposase binds the 19 bp inverted DNA repeats flanking the transposon. Then, dimerization of the DNA-bound transposase creates a synaptic DNA complex. After nicking of the first DNA strand, excision of the transposon proceeds through a series of intermediates. The transposase then mediates the insertion of the transposon at a new site by strand transfer. The activity of the wild-type transposase is very low, and is further inhibited by dimerization with the transposase inhibitor (inh). The protein is Transposase for transposon Tn5 (tnpA) of Escherichia coli.